Here is a 412-residue protein sequence, read N- to C-terminus: Tyrosine--tRNA ligase (412 aa).

Tyrosine 38 contributes to the L-tyrosine binding site. A 'HIGH' region motif is present at residues 43–52 (CTANSLHIGS). Residues tyrosine 170 and glutamine 174 each coordinate L-tyrosine. Residues 230 to 234 (KMGKT) carry the 'KMSKS' region motif. Lysine 233 provides a ligand contact to ATP. The S4 RNA-binding domain maps to 343–409 (IPISKLLHMW…CGKKRRLKVV (67 aa)).

Belongs to the class-I aminoacyl-tRNA synthetase family. TyrS type 1 subfamily. As to quaternary structure, homodimer.

Its subcellular location is the cytoplasm. It catalyses the reaction tRNA(Tyr) + L-tyrosine + ATP = L-tyrosyl-tRNA(Tyr) + AMP + diphosphate + H(+). In terms of biological role, catalyzes the attachment of tyrosine to tRNA(Tyr) in a two-step reaction: tyrosine is first activated by ATP to form Tyr-AMP and then transferred to the acceptor end of tRNA(Tyr). This is Tyrosine--tRNA ligase from Anaplasma phagocytophilum (strain HZ).